The sequence spans 118 residues: Large ribosomal subunit protein bL20 (118 aa).

The protein belongs to the bacterial ribosomal protein bL20 family.

In terms of biological role, binds directly to 23S ribosomal RNA and is necessary for the in vitro assembly process of the 50S ribosomal subunit. It is not involved in the protein synthesizing functions of that subunit. This chain is Large ribosomal subunit protein bL20, found in Hamiltonella defensa subsp. Acyrthosiphon pisum (strain 5AT).